The chain runs to 361 residues: dTDP-glucose 4,6-dehydratase (361 aa).

NAD(+) contacts are provided by residues 11-12, 32-35, 58-59, 80-84, and threonine 99; these read FI, DKLT, DI, and LAAES. A substrate-binding site is contributed by serine 84. A substrate-binding site is contributed by threonine 133. Aspartate 134 serves as the catalytic Proton donor. Active-site proton acceptor residues include glutamate 135 and tyrosine 167. 167-171 contributes to the NAD(+) binding site; sequence YSASK. Asparagine 196 is a substrate binding site. Residue asparagine 197 participates in NAD(+) binding. Substrate-binding positions include 206 to 207, 222 to 224, arginine 231, asparagine 266, and 296 to 300; these read KL, PIY, and DRPGH.

This sequence belongs to the NAD(P)-dependent epimerase/dehydratase family. dTDP-glucose dehydratase subfamily. In terms of assembly, homodimer. NAD(+) is required as a cofactor.

The catalysed reaction is dTDP-alpha-D-glucose = dTDP-4-dehydro-6-deoxy-alpha-D-glucose + H2O. Its pathway is carbohydrate biosynthesis; dTDP-L-rhamnose biosynthesis. The protein operates within bacterial outer membrane biogenesis; LPS O-antigen biosynthesis. Functionally, catalyzes the dehydration of dTDP-D-glucose to form dTDP-6-deoxy-D-xylo-4-hexulose via a three-step process involving oxidation, dehydration and reduction. This is dTDP-glucose 4,6-dehydratase (rfbB) from Shigella flexneri.